The sequence spans 317 residues: Beta-ketoacyl-[acyl-carrier-protein] synthase III (317 aa).

Active-site residues include Cys-112 and His-244. The interval 245-249 (QANLR) is ACP-binding. Asn-274 is a catalytic residue.

It belongs to the thiolase-like superfamily. FabH family. In terms of assembly, homodimer.

The protein resides in the cytoplasm. It catalyses the reaction malonyl-[ACP] + acetyl-CoA + H(+) = 3-oxobutanoyl-[ACP] + CO2 + CoA. It participates in lipid metabolism; fatty acid biosynthesis. In terms of biological role, catalyzes the condensation reaction of fatty acid synthesis by the addition to an acyl acceptor of two carbons from malonyl-ACP. Catalyzes the first condensation reaction which initiates fatty acid synthesis and may therefore play a role in governing the total rate of fatty acid production. Possesses both acetoacetyl-ACP synthase and acetyl transacylase activities. Its substrate specificity determines the biosynthesis of branched-chain and/or straight-chain of fatty acids. The sequence is that of Beta-ketoacyl-[acyl-carrier-protein] synthase III from Pasteurella multocida (strain Pm70).